A 118-amino-acid polypeptide reads, in one-letter code: Holo-[acyl-carrier-protein] synthase (118 aa).

Residues D8 and E58 each coordinate Mg(2+).

Belongs to the P-Pant transferase superfamily. AcpS family. Requires Mg(2+) as cofactor.

It is found in the cytoplasm. It carries out the reaction apo-[ACP] + CoA = holo-[ACP] + adenosine 3',5'-bisphosphate + H(+). Functionally, transfers the 4'-phosphopantetheine moiety from coenzyme A to a Ser of acyl-carrier-protein. This is Holo-[acyl-carrier-protein] synthase from Streptococcus uberis (strain ATCC BAA-854 / 0140J).